A 732-amino-acid chain; its full sequence is Polyribonucleotide nucleotidyltransferase (732 aa).

2 residues coordinate Mg(2+): Asp-503 and Asp-509. The 60-residue stretch at 570–629 (PRLTAIQVPVESIGLIIGKGGETIRSITEETGAEINIEDDGTVTIACSSNEGTKGAVEII) folds into the KH domain. The S1 motif domain maps to 639-713 (GTVYIGKVRD…GKTRFALSIK (75 aa)).

Belongs to the polyribonucleotide nucleotidyltransferase family. It depends on Mg(2+) as a cofactor.

The protein resides in the cytoplasm. The enzyme catalyses RNA(n+1) + phosphate = RNA(n) + a ribonucleoside 5'-diphosphate. Involved in mRNA degradation. Catalyzes the phosphorolysis of single-stranded polyribonucleotides processively in the 3'- to 5'-direction. The polypeptide is Polyribonucleotide nucleotidyltransferase (Chlorobium phaeovibrioides (strain DSM 265 / 1930) (Prosthecochloris vibrioformis (strain DSM 265))).